Reading from the N-terminus, the 1685-residue chain is Phosphatidylinositol 4-phosphate 3-kinase C2 domain-containing subunit alpha (1685 aa).

Disordered regions lie at residues 1–33 (MAQI…EALQ) and 41–60 (KLQK…LSSS). An N-acetylalanine modification is found at alanine 2. The interval 2–142 (AQISSNSGFK…FRPTIQRGQW (141 aa)) is interaction with clathrin; sufficient to induce clathrin assembly. The segment covering 19 to 31 (EPTRAKDVDKEEA) has biased composition (basic and acidic residues). The span at 49-60 (TDNQRGFELSSS) shows a compositional bias: polar residues. Phosphoserine occurs at positions 60, 108, 259, 327, and 338. Residues 419–507 (NASVKVSIDI…DTEIRLQLLT (89 aa)) enclose the PI3K-RBD domain. Serine 628 carries the post-translational modification Phosphoserine. In terms of domain architecture, C2 PI3K-type spans 680–839 (TTEQLQFTIF…ERIVLQVDFP (160 aa)). The region spanning 859-1035 (QHNLETLEND…EHVLGALLSV (177 aa)) is the PIK helical domain. One can recognise a PI3K/PI4K catalytic domain in the interval 1103–1381 (SIKSCSFFSS…LIESSLGSIA (279 aa)). Residues 1109–1115 (FFSSNAV) form a G-loop region. A catalytic loop region spans residues 1245 to 1253 (GICDRHNDN). The segment at 1264-1290 (HIDFGKFLGHAQMFGTFKRDRAPFVLT) is activation loop. The region spanning 1420 to 1536 (GRIKEVSVFT…TFFHPLLRDE (117 aa)) is the PX domain. The interaction with PtdIns(4,5)P2-containing membranes stretch occupies residues 1486-1491 (RMVLGR). Phosphoserine is present on serine 1551. Residues 1554–1677 (TPGQIGGAVK…NLSKETVKWY (124 aa)) enclose the C2 domain. Residues 1607–1618 (SKRKTKISRKTR) carry the Nuclear localization signal motif.

It belongs to the PI3/PI4-kinase family. In terms of assembly, part of a complex with ERBB2 and EGFR. Interacts with clathrin trimers. Interacts with SBF2/MTMR13. The cofactor is Ca(2+). Requires Mg(2+) as cofactor. Post-translationally, phosphorylated on Ser-259 during mitosis and upon UV irradiation; which does not change enzymatic activity but leads to proteasomal degradation. Phosphorylated upon insulin stimulation; which may lead to enzyme activation.

Its subcellular location is the cell membrane. It localises to the cytoplasmic vesicle. It is found in the clathrin-coated vesicle. The protein resides in the nucleus. The protein localises to the cytoplasm. Its subcellular location is the golgi apparatus. It localises to the trans-Golgi network. The catalysed reaction is a 1,2-diacyl-sn-glycero-3-phospho-(1D-myo-inositol 4-phosphate) + ATP = a 1,2-diacyl-sn-glycero-3-phospho-(1D-myo-inositol-3,4-bisphosphate) + ADP + H(+). It carries out the reaction a 1,2-diacyl-sn-glycero-3-phospho-(1D-myo-inositol) + ATP = a 1,2-diacyl-sn-glycero-3-phospho-(1D-myo-inositol-3-phosphate) + ADP + H(+). It catalyses the reaction a 1,2-diacyl-sn-glycero-3-phospho-(1D-myo-inositol-4,5-bisphosphate) + ATP = a 1,2-diacyl-sn-glycero-3-phospho-(1D-myo-inositol-3,4,5-trisphosphate) + ADP + H(+). Only slightly inhibited by wortmannin and LY294002. Activated by clathrin and insulin. In terms of biological role, generates phosphatidylinositol 3-phosphate (PtdIns3P) and phosphatidylinositol 3,4-bisphosphate (PtdIns(3,4)P2) that act as second messengers. Has a role in several intracellular trafficking events. Functions in insulin signaling and secretion. Required for translocation of the glucose transporter SLC2A4/GLUT4 to the plasma membrane and glucose uptake in response to insulin-mediated RHOQ activation. Regulates insulin secretion through two different mechanisms: involved in glucose-induced insulin secretion downstream of insulin receptor in a pathway that involves AKT1 activation and TBC1D4/AS160 phosphorylation, and participates in the late step of insulin granule exocytosis probably in insulin granule fusion. Synthesizes PtdIns3P in response to insulin signaling. Functions in clathrin-coated endocytic vesicle formation and distribution. Regulates dynamin-independent endocytosis, probably by recruiting EEA1 to internalizing vesicles. In neurosecretory cells synthesizes PtdIns3P on large dense core vesicles. Participates in calcium induced contraction of vascular smooth muscle by regulating myosin light chain (MLC) phosphorylation through a mechanism involving Rho kinase-dependent phosphorylation of the MLCP-regulatory subunit MYPT1. May play a role in the EGF signaling cascade. May be involved in mitosis and UV-induced damage response. Required for maintenance of normal renal structure and function by supporting normal podocyte function. Involved in the regulation of ciliogenesis and trafficking of ciliary components. The chain is Phosphatidylinositol 4-phosphate 3-kinase C2 domain-containing subunit alpha (PIK3C2A) from Pongo abelii (Sumatran orangutan).